We begin with the raw amino-acid sequence, 630 residues long: 1,4-alpha-glucan branching enzyme GlgB (630 aa).

Asp311 (nucleophile) is an active-site residue. Glu362 (proton donor) is an active-site residue.

Belongs to the glycosyl hydrolase 13 family. GlgB subfamily. Monomer.

The enzyme catalyses Transfers a segment of a (1-&gt;4)-alpha-D-glucan chain to a primary hydroxy group in a similar glucan chain.. It functions in the pathway glycan biosynthesis; glycogen biosynthesis. Functionally, catalyzes the formation of the alpha-1,6-glucosidic linkages in glycogen by scission of a 1,4-alpha-linked oligosaccharide from growing alpha-1,4-glucan chains and the subsequent attachment of the oligosaccharide to the alpha-1,6 position. This is 1,4-alpha-glucan branching enzyme GlgB from Aquifex aeolicus (strain VF5).